The following is a 442-amino-acid chain: Trigger factor (442 aa).

One can recognise a PPIase FKBP-type domain in the interval 176–259 (GDFISLSLYV…VNAVIEISSP (84 aa)).

Belongs to the FKBP-type PPIase family. Tig subfamily.

It is found in the cytoplasm. It catalyses the reaction [protein]-peptidylproline (omega=180) = [protein]-peptidylproline (omega=0). Involved in protein export. Acts as a chaperone by maintaining the newly synthesized protein in an open conformation. Functions as a peptidyl-prolyl cis-trans isomerase. The protein is Trigger factor of Chlamydia trachomatis serovar A (strain ATCC VR-571B / DSM 19440 / HAR-13).